A 169-amino-acid polypeptide reads, in one-letter code: Ribosome maturation factor RimM (169 aa).

Residues 92 to 167 form the PRC barrel domain; sequence PKDTYFICDI…YMKIKVVEGL (76 aa).

The protein belongs to the RimM family. As to quaternary structure, binds ribosomal protein uS19.

Its subcellular location is the cytoplasm. An accessory protein needed during the final step in the assembly of 30S ribosomal subunit, possibly for assembly of the head region. Essential for efficient processing of 16S rRNA. May be needed both before and after RbfA during the maturation of 16S rRNA. It has affinity for free ribosomal 30S subunits but not for 70S ribosomes. The sequence is that of Ribosome maturation factor RimM from Caldicellulosiruptor bescii (strain ATCC BAA-1888 / DSM 6725 / KCTC 15123 / Z-1320) (Anaerocellum thermophilum).